The primary structure comprises 3473 residues: Genome polyprotein (3473 aa).

Positions 514 to 604 (EVQDALEKSM…RNDIEALKKK (91 aa)) form a coiled coil. Disordered regions lie at residues 602–644 (KKKP…SEAQ) and 1278–1306 (YLADEQPTTSAPRTSIVNTEDDPPTEGEI). 2 stretches are compositionally biased toward polar residues: residues 607–622 (QSVTPLPSPSGNSGTA) and 1278–1295 (YLADEQPTTSAPRTSIVN). Helical transmembrane passes span 1496-1516 (DKWIWAALASILVGAALLHYY) and 1595-1615 (MSSLLTILSVVASLVMWGKIP). An SF3 helicase domain is found at 1751–1917 (LELMNESYTY…PDVPKNEANP (167 aa)). 1777 to 1784 (GAPGVGKS) is a binding site for ATP. A helical transmembrane segment spans residues 2363–2383 (ILLAIGASVAVAGVAVGAVIL). The segment covering 2394-2404 (EDEEIEGEEGE) has biased composition (acidic residues). 2 disordered regions span residues 2394–2415 (EDEEIEGEEGETQASGAHESDG) and 2438–2465 (VAEAHEEKDAEKPRKSGNPTRKSYLGLS). A compositionally biased stretch (basic and acidic residues) spans 2438–2451 (VAEAHEEKDAEKPR). In terms of domain architecture, Peptidase C3 spans 2632-2850 (GVDRDLSMTN…YAETLTQEHL (219 aa)). Active-site for picornain 3C-like protease activity residues include H2680, E2717, and C2811. A RdRp catalytic domain is found at 3155 to 3286 (TKGFAGDYSK…SVHEEFLDVY (132 aa)).

Post-translationally, specific enzymatic cleavages by picornain 3C-like protease in vivo yield mature proteins. Picornain 3C-like protease is autocatalytically processed.

The protein resides in the virion. It is found in the host membrane. The catalysed reaction is RNA(n) + a ribonucleoside 5'-triphosphate = RNA(n+1) + diphosphate. In terms of biological role, picornain 3C-like protease is a thiol protease that probably cleaves the polyprotein. This chain is Genome polyprotein, found in Oryza sativa (Rice).